The primary structure comprises 390 residues: Probable tRNA sulfurtransferase (390 aa).

Residues 58-161 (EAVARRLQRV…DEGAYIYSRI (104 aa)) enclose the THUMP domain. ATP contacts are provided by residues 179–180 (LI), 204–205 (HF), R261, G283, and Q292.

It belongs to the ThiI family.

Its subcellular location is the cytoplasm. The catalysed reaction is [ThiI sulfur-carrier protein]-S-sulfanyl-L-cysteine + a uridine in tRNA + 2 reduced [2Fe-2S]-[ferredoxin] + ATP + H(+) = [ThiI sulfur-carrier protein]-L-cysteine + a 4-thiouridine in tRNA + 2 oxidized [2Fe-2S]-[ferredoxin] + AMP + diphosphate. It catalyses the reaction [ThiS sulfur-carrier protein]-C-terminal Gly-Gly-AMP + S-sulfanyl-L-cysteinyl-[cysteine desulfurase] + AH2 = [ThiS sulfur-carrier protein]-C-terminal-Gly-aminoethanethioate + L-cysteinyl-[cysteine desulfurase] + A + AMP + 2 H(+). It functions in the pathway cofactor biosynthesis; thiamine diphosphate biosynthesis. Catalyzes the ATP-dependent transfer of a sulfur to tRNA to produce 4-thiouridine in position 8 of tRNAs, which functions as a near-UV photosensor. Also catalyzes the transfer of sulfur to the sulfur carrier protein ThiS, forming ThiS-thiocarboxylate. This is a step in the synthesis of thiazole, in the thiamine biosynthesis pathway. The sulfur is donated as persulfide by IscS. The sequence is that of Probable tRNA sulfurtransferase from Moorella thermoacetica (strain ATCC 39073 / JCM 9320).